We begin with the raw amino-acid sequence, 394 residues long: Potassium channel subfamily K member 3 (394 aa).

Topologically, residues 1–8 are cytoplasmic; it reads MKRQNVRT. The chain crosses the membrane as a helical span at residues 9 to 29; that stretch reads LALIVCTFTYLLVGAAVFDAL. N-linked (GlcNAc...) asparagine glycosylation occurs at asparagine 53. The pore-forming intramembrane region spans 78 to 101; it reads WRFAGSFYFAITVITTIGYGHAAP. K(+)-binding residues include threonine 93, isoleucine 94, glycine 95, and tyrosine 96. The selectivity filter 1 stretch occupies residues 93–98; sequence TIGYGH. Residues 108–128 form a helical membrane-spanning segment; sequence VFCMFYALLGIPLTLVMFQSL. Over 129–158 the chain is Cytoplasmic; the sequence is GERINTLVRYLLHRAKKGLGMRRADVSMAN. The helical transmembrane segment at 159–179 threads the bilayer; that stretch reads MVLIGFFSCISTLCIGAAAFS. The pore-forming intramembrane region spans 184-207; sequence WTFFQAYYYCFITLTTIGFGDYVA. K(+)-binding residues include threonine 199, isoleucine 200, glycine 201, and phenylalanine 202. The segment at 199–204 is selectivity filter 2; that stretch reads TIGFGD. The chain crosses the membrane as a helical span at residues 223–243; sequence FSFVYILTGLTVIGAFLNLVV. Residues 243-248 form an X-gate region; sequence VLRFMT. Residues 244 to 394 are Cytoplasmic-facing; it reads LRFMTMNAED…RGLMKRRSSV (151 aa). Disordered stretches follow at residues 266 to 286 and 338 to 357; these read RNGQ…DTAS and TCVE…SDTP. Gly residues predominate over residues 269–278; the sequence is QAGGGGGGGS.

This sequence belongs to the two pore domain potassium channel (TC 1.A.1.8) family. In terms of assembly, homodimer. Heterodimer with KCNK1. Heterodimer with KCNK9. Widespread expression in adult. Strongest expression in pancreas and placenta. Lower expression in brain, lung, prostate, heart, kidney, uterus, small intestine and colon.

It is found in the cell membrane. The enzyme catalyses K(+)(in) = K(+)(out). It carries out the reaction Na(+)(in) = Na(+)(out). Its activity is regulated as follows. Inhibited by external acidification, diacylglycerol and anandamide. Activated by halothane and isoflurane. K(+) channel that conducts voltage-dependent outward rectifying currents upon membrane depolarization. Voltage sensing is coupled to K(+) electrochemical gradient in an 'ion flux gating' mode where outward but not inward ion flow opens the gate. Changes ion selectivity and becomes permeable to Na(+) ions in response to extracellular acidification. Protonation of the pH sensor His-98 stabilizes C-type inactivation conformation likely converting the channel from outward K(+)-conducting, to inward Na(+)-conducting to nonconductive state. Homo- and heterodimerizes to form functional channels with distinct regulatory and gating properties. Allows K(+) currents with fast-gating kinetics important for the repolarization and hyperpolarization phases of action potentials. In cerebellar granule cells, heteromeric KCNK3:KCNK9 channel may hyperpolarize the resting membrane potential to limit intrinsic neuronal excitability, but once the action potential threshold is reached, it may support high-frequency action potential firing and increased neuronal excitability. Dispensable for central chemosensory respiration i.e. breathing controlled by brainstem CO2/pH, it rather conducts pH-sensitive currents and controls the firing rate of serotonergic raphe neurons involved in potentiation of the respiratory chemoreflex. Additionally, imparts chemosensitivity to type 1 cells in carotid bodies which respond to a decrease in arterial oxygen pressure or an increase in carbon dioxide pressure or pH to initiate adaptive changes in pulmonary ventilation. In adrenal gland, contributes to the maintenance of a hyperpolarized resting membrane potential of aldosterone-producing cells at zona glomerulosa and limits aldosterone release as part of a regulatory mechanism that controls arterial blood pressure and electrolyte homeostasis. In brown adipocytes, mediates K(+) efflux that counteracts norepinephrine-induced membrane depolarization, limits Ca(2+) efflux and downstream cAMP and PKA signaling, ultimately attenuating lipid oxidation and adaptive thermogenesis. The sequence is that of Potassium channel subfamily K member 3 from Homo sapiens (Human).